A 251-amino-acid chain; its full sequence is MKILVSNDDGVLAPGIKILANELSTLGEVKVVAPDRNRSGASNSLTLTQPLRVKQLDNGYYSVDGTPTDCVHLALTGFLEPTDIVVSGINEGANLGDDVLYSGTVAAAMEGRYLGLPAIAISMVGDNIQHYETAAIIAKQLVIKLSANKLPSQTILNVNVPDLPLNQIRGLQVTRLGTRHSAEPIIKEYDPRGRPIYWVGPPGIEADAGAGTDFFAIKTGHVSITPLHLDMTHYKLFDHLSNLLNEICIEN.

Asp8, Asp9, Ser39, and Asn90 together coordinate a divalent metal cation.

It belongs to the SurE nucleotidase family. A divalent metal cation is required as a cofactor.

It is found in the cytoplasm. It catalyses the reaction a ribonucleoside 5'-phosphate + H2O = a ribonucleoside + phosphate. In terms of biological role, nucleotidase that shows phosphatase activity on nucleoside 5'-monophosphates. The protein is 5'-nucleotidase SurE of Legionella pneumophila subsp. pneumophila (strain Philadelphia 1 / ATCC 33152 / DSM 7513).